Consider the following 507-residue polypeptide: MEFLSFPLSSALLIILLFMLVKKAIQNKNSKLPPGPRKLPVIGSLHHLIGDGLPHHALRNLAKKHGPLMHLQLGENSTLVVSSSKMARAIMSTHDLMFANRTVQFATDILLYGGKGIGLAPYGDYWRQIRKICVLELLSAKRVQSFQTVREEEISNLIRSISAESSKVNFSEMITSLTNDIIARAAFGEKCKDKHAFLSLIEEGIQLAGGFDIAGLFPSLKLLHVITGKKRQLERVHNELDRILVDIIKENKEKRRASKLNEDKYEENLVDVLVRVQENTQLEVPLANDNLKAVILDIFVAGSETSSTTIEWAMSEMLKNPKVMKKAQAEVRRVFSGNKKINETEIQELSYLKLVLKETLRLHAPAPLLIPRECRESCEIDGYEIPKKTMVMVNAWAIGRDPENWSNGDRFEPERFDGISVDYKGTNFEYIPFGAGRRICPGMLFGMANVEVPLARLLYHFDWELPNGIKPEELDMDETFGTTVRRKNHLYLIPTVVHELERSTTKE.

A helical membrane pass occupies residues 1–21 (MEFLSFPLSSALLIILLFMLV). Residue Cys-440 participates in heme binding.

The protein belongs to the cytochrome P450 family. The cofactor is heme. Rhizome-specific expression.

The protein localises to the membrane. The catalysed reaction is (-)-deoxypodophyllotoxin + reduced [NADPH--hemoprotein reductase] + O2 = (-)-4'-desmethyl-deoxypodophyllotoxin + formaldehyde + oxidized [NADPH--hemoprotein reductase] + H2O + H(+). Its pathway is aromatic compound metabolism; phenylpropanoid biosynthesis. In terms of biological role, cytochrome P450 involved in the biosynthesis of etoposide, a chemotherapeutic compound of the topoisomerase inhibitor family. Catalyzes the conversion of deoxypodophyllotoxin to desmethyl-deoxypodophyllotoxin. In Sinopodophyllum hexandrum (Himalayan may apple), this protein is Desmethyl-deoxy-podophyllotoxin synthase.